Reading from the N-terminus, the 506-residue chain is MNSTPVLEMRNIAKAFGKFYALKGVDLTVYPGEIHALMGENGAGKSTLMKVLAGAYTATSGEILIDGKPFHIRTPKDALSAGITLIYQEMQLAPNLSVAENIFLGSELSHGGLVQRKEMLVQAQKVIDRLGAQFNASDKVMTLTIAEQQQVEIARALHRNSRILVMDEPTAALSSRETHRLFELIMRLRDEGMAIIYISHRMAEVYELSDRVSVLRDGQYVGSLTRDNLNAGELVRMMVGRPLSDLFNKERDIPLGKARLNVHHLTDGGKVQPSSLLVRSGEIVGLAGLVGAGRSELAQLIFGVRKATGGMIEVDGEPVVIHSPREAIDLGIGFLTENRKEQGLFLEMAAAENITMATLERDARWGMLNRKKAQTISDDAIKLLNIRVPHAQVRAGGLSGGNQQKLLISRWVAIGPRILLLDEPARGVDVGAKSEIYRIMNEMARKGVAILMISSELPEIVGMSDRVYVMREGSIAGELNGKNITQENIMTLATGVNDAHSQAVTS.

ABC transporter domains are found at residues 7 to 242 (LEMR…VGRP) and 250 to 497 (ERDI…TGVN). An ATP-binding site is contributed by 39 to 46 (GENGAGKS).

This sequence belongs to the ABC transporter superfamily. Ribose importer (TC 3.A.1.2.1) family. The complex is composed of an ATP-binding protein (RbsA), two transmembrane proteins (RbsC) and a solute-binding protein (RbsB).

Its subcellular location is the cell inner membrane. It catalyses the reaction D-ribose(out) + ATP + H2O = D-ribose(in) + ADP + phosphate + H(+). Part of the ABC transporter complex RbsABC involved in ribose import. Responsible for energy coupling to the transport system. The polypeptide is Ribose import ATP-binding protein RbsA 2 (Escherichia coli O157:H7).